Here is a 251-residue protein sequence, read N- to C-terminus: Derlin-1 (251 aa).

Serine 2 carries the N-acetylserine modification. Residues 2 to 15 (SDIGDWFRSIPAIT) lie on the Cytoplasmic side of the membrane. The helical transmembrane segment at 16–31 (RYWFAATVAVPLIGKL) threads the bilayer. The Lumenal segment spans residues 32 to 69 (GIISPAYFFLWPEAFLYRFQIWRPFTATFYFPVGPGTG). A helical membrane pass occupies residues 70 to 89 (FLYLVNLYFLYQYSTRLEAG). At 90–94 (AFDGR) the chain is on the cytoplasmic side. The chain crosses the membrane as a helical span at residues 95–115 (PADYLFMLLFNWICIVITGLA). At 116-122 (MDMQLLM) the chain is on the lumenal side. A helical membrane pass occupies residues 123-137 (IPLIMSVLYVWAQLN). Topologically, residues 138 to 154 (RDLIVSFWFGTRFKACY) are cytoplasmic. Residues 155-166 (LPWVILGFNYII) form a helical membrane-spanning segment. At 167–170 (GGSV) the chain is on the lumenal side. A helical transmembrane segment spans residues 171–189 (INELIGNLVGHLYFFLMFR). Residues 190–251 (YPMDLGGRNF…WGQGFRLGDQ (62 aa)) lie on the Cytoplasmic side of the membrane. Serine 201 carries the post-translational modification Phosphoserine. Threonine 202 carries the phosphothreonine modification. Position 226 is a phosphoserine (serine 226). Positions 229 to 251 (RAADQNGGGGRHNWGQGFRLGDQ) are disordered. An SHP-box motif is present at residues 241-248 (NWGQGFRL).

This sequence belongs to the derlin family. In terms of assembly, homotetramer. The four subunits of the tetramer are arranged in a twofold symmetry. Forms homo- and heterooligomers with DERL2 and DERL3; binding to DERL3 is poorer than that between DERL2 and DERL3. Interacts (via SHP-box motif) with VCP. Interacts with AMFR, SELENOS, SEL1L, SELENOK and SYVN1, as well as with SEL1L-SYVN1 and VCP-SELENOS protein complexes; this interaction is weaker than that observed between DERL2 and these complexes. Interacts with NGLY1 and YOD1. Does not bind to EDEM1. Interacts with DNAJB9. Interacts with RNF103. Interacts with HM13. Interacts with XBP1 isoform 1 (via luminal/ectodomain domain); the interaction obviates the need for ectodomain shedding prior HM13/SPP-mediated XBP1 isoform 1 cleavage. Interacts with the signal recognition particle/SRP and the SRP receptor; in the process of endoplasmic reticulum stress-induced pre-emptive quality control. May interact with UBXN6. Interacts with ZFAND2B; probably through VCP. Interacts with CCDC47. Interacts with C18orf32. May interact with TRAM1. Forms a complex with SVIP and VCP/p97. Widely expressed, with lowest levels in brain and heart.

The protein resides in the endoplasmic reticulum membrane. Functionally, functional component of endoplasmic reticulum-associated degradation (ERAD) for misfolded lumenal proteins. Forms homotetramers which encircle a large channel traversing the endoplasmic reticulum (ER) membrane. This allows the retrotranslocation of misfolded proteins from the ER into the cytosol where they are ubiquitinated and degraded by the proteasome. The channel has a lateral gate within the membrane which provides direct access to membrane proteins with no need to reenter the ER lumen first. May mediate the interaction between VCP and the misfolded protein. Also involved in endoplasmic reticulum stress-induced pre-emptive quality control, a mechanism that selectively attenuates the translocation of newly synthesized proteins into the endoplasmic reticulum and reroutes them to the cytosol for proteasomal degradation. By controlling the steady-state expression of the IGF1R receptor, indirectly regulates the insulin-like growth factor receptor signaling pathway. The chain is Derlin-1 from Mus musculus (Mouse).